The sequence spans 399 residues: Forkhead box protein A4-A (399 aa).

Residues 119 to 213 (KPPYSYISLI…ENGCYLRRQK (95 aa)) constitute a DNA-binding region (fork-head). Positions 219 to 234 (RSKSGEGEKKVNKPGE) are enriched in basic and acidic residues. Residues 219-290 (RSKSGEGEKK…VGLSPTSEQA (72 aa)) are disordered. A compositionally biased stretch (polar residues) spans 267–277 (STGSSIHQACG).

As to expression, during stages 8.5 to 10, expressed in the part of the dorsal mesoderm invaginating the dorsal blastopore lip (Spemann organizer), as a direct response to dorsal mesodermal induction. At stage 12 (mid-gastrulation), restricted to the dorsal midline in the deeper layers of mesodermal cells. Continuously present in the posterior portion of invaginated mesoderm and expressed within the notochord. Also present in the midline of the neural plate during gastrulation, but absent from the notoplate in exogastrula embryos. Expression in the notochord continues in neurula-stage embryos and at stage 20 in addition to the notochord, expression is seen in the pharyngeal endoderm.

It is found in the nucleus. In terms of biological role, transcriptional repressor involved in embryonic nervous system development. Plays a role in the induction and patterning of the anterior-posterior neural axis. Involved in the establishment of floor plate differentiation from neural plate cells during gastrulation. Binds the anf1 promoter sequence to restrict expression of anf1 to the anterior of the neural plate, thereby patterning the forebrain. Can bind to the HNF-3-alpha DNA target sequence. Cooperates with t/bra in a dose-dependent manner to specify dorsal mesoderm formation, including notochord. Binds to DNA via the target sequence 5'-[GA]TAAA[TC]A-3', with 5'-GTAAATA-3' being the preferred binding site. This Xenopus laevis (African clawed frog) protein is Forkhead box protein A4-A (foxa4-a).